A 498-amino-acid polypeptide reads, in one-letter code: Pre-glycoprotein polyprotein GP complex (498 aa).

Gly-2 is lipidated: N-myristoyl glycine; by host. Residues Gly-2 to Glu-17 are Extracellular-facing. A helical transmembrane segment spans residues Val-18–Lys-33. Topologically, residues Ala-34 to Gly-58 are cytoplasmic. A Zn(2+)-binding site is contributed by Cys-57. Topologically, residues Met-59 to Asp-438 are extracellular. Residues Asn-85, Asn-95, Asn-114, Asn-124, and Asn-171 are each glycosylated (N-linked (GlcNAc...) asparagine; by host). Disulfide bonds link Cys-92–Cys-239, Cys-123–Cys-160, Cys-184–Cys-220, Cys-285–Cys-298, Cys-307–Cys-316, and Cys-370–Cys-391. An N-linked (GlcNAc...) asparagine; by host glycan is attached at Asn-232. Asn-371, Asn-396, and Asn-401 each carry an N-linked (GlcNAc...) asparagine; by host glycan. A helical transmembrane segment spans residues Leu-439–Pro-459. The Cytoplasmic portion of the chain corresponds to Thr-460–Arg-498. His-461, His-463, Cys-469, His-473, Cys-481, and Cys-483 together coordinate Zn(2+).

Belongs to the arenaviridae GPC protein family. Interacts with glycoprotein G2. Part of the GP complex (GP-C) together with glycoprotein G1 and glycoprotein G2. The GP-complex interacts with protein Z, which interacts with ribonucleocapsid; these interactions may induce virion budding. In terms of assembly, homotrimer; disulfide-linked. In pre-fusion state, G1 homotrimers bind G2 homotrimers via ionic interactions. Part of the GP complex (GP-C) together with glycoprotein G2 and the stable signal peptide. Interacts with the primary host receptor DAG1 on the cell surface. The GP-complex interacts with protein Z, which interacts with ribonucleocapsid; these interactions may induce virion budding. As to quaternary structure, homotrimer. Interacts with the stable signal peptide. In pre-fusion state, G2 homotrimers bind G1 homotrimers via ionic interactions. Part of the GP complex (GP-C) together with glycoprotein G1 and the stable signal peptide. Acidification in the endosome triggers rearrangements, which ultimately leads to a 6 helix bundle formed by the two heptad repeat domains (HR1 and HR2) in post-fusion state. The GP-complex interacts with protein Z, which interacts with ribonucleocapsid; these interactions may induce virion budding. Specific enzymatic cleavages in vivo yield mature proteins. GP-C polyprotein is cleaved in the endoplasmic reticulum by the host protease MBTPS1. Only cleaved glycoprotein is incorporated into virions. Post-translationally, the SSP remains stably associated with the GP complex following cleavage by signal peptidase and plays crucial roles in the trafficking of GP through the secretory pathway. In terms of processing, myristoylation is necessary for GP2-mediated fusion activity.

It localises to the virion membrane. The protein resides in the host endoplasmic reticulum membrane. The protein localises to the host Golgi apparatus membrane. Its subcellular location is the host cell membrane. Functionally, functions as a cleaved signal peptide that is retained as the third component of the GP complex (GP-C). Helps to stabilize the spike complex in its native conformation. The SSP is required for efficient glycoprotein expression, post-translational maturation cleavage of G1 and G2, glycoprotein transport to the cell surface plasma membrane, formation of infectious virus particles, and acid pH-dependent glycoprotein-mediated cell fusion. Forms the virion spikes together with glycoprotein G2. The glycoprotein spike trimers are connected to the underlying matrix. Interacts with the host receptor. Mediates virus attachment to the host primary receptor alpha-dystroglycan DAG1 (alpha-DG) at the cell surface. Down-modulates host DAG1. Its function is as follows. Forms the virion spikes together with glycoprotein G1. The glycoprotein spike trimers are connected to the underlying matrix. Class I viral fusion protein that directs fusion of viral and host endosomal membranes, leading to delivery of the nucleocapsid into the cytoplasm. Membrane fusion is mediated by irreversible conformational changes induced by acidification. The chain is Pre-glycoprotein polyprotein GP complex from Homo sapiens (Human).